Here is a 286-residue protein sequence, read N- to C-terminus: Acetylglutamate kinase (286 aa).

Substrate-binding positions include 70–71 (GG), Arg-92, and Asn-184.

Belongs to the acetylglutamate kinase family. ArgB subfamily.

The protein localises to the cytoplasm. The catalysed reaction is N-acetyl-L-glutamate + ATP = N-acetyl-L-glutamyl 5-phosphate + ADP. Its pathway is amino-acid biosynthesis; L-arginine biosynthesis; N(2)-acetyl-L-ornithine from L-glutamate: step 2/4. In terms of biological role, catalyzes the ATP-dependent phosphorylation of N-acetyl-L-glutamate. This Ruegeria sp. (strain TM1040) (Silicibacter sp.) protein is Acetylglutamate kinase.